An 827-amino-acid chain; its full sequence is Spastin (827 aa).

The span at 1-13 shows a compositional bias: polar residues; it reads MVRNKYTLTTAGK. The tract at residues 1-58 is disordered; the sequence is MVRNKYTLTTAGKSPSKKSRTGSLSKQHDATGDDDGETGTLDGSGSAAGSPVGGGTDA. Residues 1–79 are Cytoplasmic-facing; that stretch reads MVRNKYTLTT…KQNLYIISFP (79 aa). Over residues 38 to 50 the composition is skewed to low complexity; the sequence is TGTLDGSGSAAGS. Residues 80-100 constitute an intramembrane region (helical); that stretch reads VIFVFNVLRSLLYQLFIVFRY. Residues 101 to 827 are Cytoplasmic-facing; it reads VYNFTTKVVY…WLQDFGDVTL (727 aa). 2 disordered regions span residues 127-190 and 207-229; these read QHGH…AHPL and SIQR…KQKH. Basic residues predominate over residues 129–141; it reads GHHHHHHHRHSSH. Residues 142–190 show a composition bias toward low complexity; the sequence is SIHSTAAAHQLQQHQQQQQHQYSLLQQEQHGVTEPQQQQQQQHQAAHPL. Residues 231–306 enclose the MIT domain; sequence HRRAFEYISK…SMARDRLQFL (76 aa). Disordered regions lie at residues 358–381, 398–433, and 476–526; these read HHPA…ATPS, VGYK…GGAG, and VSIP…PQIS. The segment covering 364–381 has biased composition (low complexity); that stretch reads TAASSRPTTAATAPATPS. 2 stretches are compositionally biased toward low complexity: residues 476-486 and 510-524; these read VSIPIPGSSPV and QQPQ…QQPQ. 592–599 contacts ATP; the sequence is GPPGNGKT.

The protein belongs to the AAA ATPase family. Spastin subfamily. Homohexamer. The homohexamer is stabilized by ATP-binding. The homohexamer may adopt a ring conformation through which microtubules pass prior to being severed. Interacts with microtubules.

It localises to the membrane. The protein localises to the cytoplasm. It is found in the cytoskeleton. Its subcellular location is the microtubule organizing center. The protein resides in the centrosome. It catalyses the reaction n ATP + n H2O + a microtubule = n ADP + n phosphate + (n+1) alpha/beta tubulin heterodimers.. Functionally, ATP-dependent microtubule severing protein. Microtubule severing may promote reorganization of cellular microtubule arrays and the release of microtubules from the microtubule organizing center following nucleation. This chain is Spastin (spas), found in Anopheles gambiae (African malaria mosquito).